Consider the following 448-residue polypeptide: Putative RNA-ligase (448 aa).

It belongs to the asfivirus M448R family.

The protein resides in the virion. This is Putative RNA-ligase from African swine fever virus (isolate Pig/Kenya/KEN-50/1950) (ASFV).